A 428-amino-acid polypeptide reads, in one-letter code: MNYLFKNGRYMNEEGKIVATDLLVQDGKIAKVAENITADNAEVIDVNGKLIAPGLVDVHVHLREPGGEHKETIETGTLAAAKGGFTTICAMPNTRPVPDCREHMEDLQKRIEEKAHVNVLPYGAITVRQAGSEMTDFETLKELGAFAFTDDGVGVQDASMMLAAMKRAAKLDMAVVAHCEENTLINKGCVHEGKFSEKHGLNGIPSVCESVHIARDILLAEAADCHYHVCHVSTKGSVRVIRDAKRAGIKVTAEVTPHHLVLCEDDIPSADPNFKMNPPLRGKEDHAALIEGLLDGTIDMIATDHAPHTAEEKAQGIERAPFGITGFETAFPLLYTNLVKKGVITLEQLIQFLTEKPADTFGLEAGRLKEGRAADITIIDLEQEEEIDPTTFLSKGKNTPFAGWKCQGWPVMTIVGGKIAWQKESALV.

Positions 59 and 61 each coordinate Zn(2+). Substrate is bound by residues 61–63 and asparagine 93; that span reads HLR. The Zn(2+) site is built by aspartate 151, histidine 178, and histidine 231. Asparagine 277 contributes to the substrate binding site. Aspartate 304 serves as a coordination point for Zn(2+). Aspartate 304 is an active-site residue. Residues histidine 308 and 322-323 each bind substrate; that span reads FG.

Belongs to the metallo-dependent hydrolases superfamily. DHOase family. Class I DHOase subfamily. Requires Zn(2+) as cofactor.

The enzyme catalyses (S)-dihydroorotate + H2O = N-carbamoyl-L-aspartate + H(+). It participates in pyrimidine metabolism; UMP biosynthesis via de novo pathway; (S)-dihydroorotate from bicarbonate: step 3/3. In terms of biological role, catalyzes the reversible cyclization of carbamoyl aspartate to dihydroorotate. In Bacillus cereus (strain ATCC 14579 / DSM 31 / CCUG 7414 / JCM 2152 / NBRC 15305 / NCIMB 9373 / NCTC 2599 / NRRL B-3711), this protein is Dihydroorotase.